A 226-amino-acid polypeptide reads, in one-letter code: Endonuclease NucS (226 aa).

This sequence belongs to the NucS endonuclease family.

Its subcellular location is the cytoplasm. Functionally, cleaves both 3' and 5' ssDNA extremities of branched DNA structures. This is Endonuclease NucS from Mycobacterium tuberculosis (strain CDC 1551 / Oshkosh).